The sequence spans 486 residues: Glutamyl-tRNA(Gln) amidotransferase subunit A (486 aa).

Catalysis depends on charge relay system residues K79 and S154. S178 (acyl-ester intermediate) is an active-site residue.

Belongs to the amidase family. GatA subfamily. Heterotrimer of A, B and C subunits.

It catalyses the reaction L-glutamyl-tRNA(Gln) + L-glutamine + ATP + H2O = L-glutaminyl-tRNA(Gln) + L-glutamate + ADP + phosphate + H(+). Functionally, allows the formation of correctly charged Gln-tRNA(Gln) through the transamidation of misacylated Glu-tRNA(Gln) in organisms which lack glutaminyl-tRNA synthetase. The reaction takes place in the presence of glutamine and ATP through an activated gamma-phospho-Glu-tRNA(Gln). The chain is Glutamyl-tRNA(Gln) amidotransferase subunit A from Dehalococcoides mccartyi (strain CBDB1).